A 1277-amino-acid chain; its full sequence is Y' element ATP-dependent helicase YEL077C (1277 aa).

Positions 222–399 (EIYMADTPSV…LQRIGLTGLA (178 aa)) constitute a Helicase ATP-binding domain. 235 to 242 (APPGYGKT) provides a ligand contact to ATP. Positions 345–348 (DEFH) match the DEAH box motif. The Helicase C-terminal domain maps to 454–605 (ALKLLLALFE…EFYGLESKKG (152 aa)). Disordered regions lie at residues 696–763 (NVRT…NATT) and 775–895 (TTKS…NRFH). A compositionally biased stretch (low complexity) spans 775 to 878 (TTKSINSSTN…ATTTESTNAS (104 aa)). Positions 879-895 (AKEDANKDGNAEDNRFH) are enriched in basic and acidic residues.

Belongs to the helicase family. Yeast subtelomeric Y' repeat subfamily.

Its function is as follows. Catalyzes DNA unwinding and is involved in telomerase-independent telomere maintenance. This chain is Y' element ATP-dependent helicase YEL077C, found in Saccharomyces cerevisiae (strain ATCC 204508 / S288c) (Baker's yeast).